The primary structure comprises 502 residues: MTRSLTMNSSLPAIDGLRLPHQMLIGGQWVNAQSDKTLNVYNPATGDTLTDVPDGDVEDVNAAVESAAATLQSDAWRRMPPSARERILLRLADLLEAHGDELARLETLNNGKLLIYSKMMEVGASAQWLRYMAGWATKLTGSTLDLSLPLPPDVRSRASTQRVPVGVVAAIIPWNFPLLMAVWKIAPALACGNTVVLKPAEETPLTALRLAELAMEAGLPAGALNVVTGRGETAGDALVRHPKVAKVAFTGSTEVGRIIGSACGRSLKAVSLELGGKSPVIVLADCDPQEAAEGAAAAIFFNHGQVCTAGSRLYVHESIYEDVIQRLAVIGESIVVGSGLEQGVHMGPMVSKKHHENVLRHIRNGIEDGADLICGGTEAPCAQGFFVKPTIFANREKKDIRLLSQEVFGPVLVATPFSDIAEVVNEANRSVYGLGASIWTNDLSAALRINDELEAGTVWVNTHNMVDPNLPFGGFKDSGVGREHGAAAIEHYTTTRSLVIAY.

NAD(+) is bound at residue 251–256; sequence GSTEVG. Active-site residues include Glu273 and Cys307.

It belongs to the aldehyde dehydrogenase family.

It carries out the reaction 2-phenylacetaldehyde + NAD(+) + H2O = 2-phenylacetate + NADH + 2 H(+). The protein operates within aromatic compound metabolism. Phenylacetaldehyde dehydrogenase that catalyzes the last step in the aerobic styrene degradation pathway by mediating oxidation of phenylacetaldehyde to phenylacetic acid. This chain is Phenylacetaldehyde dehydrogenase (styD), found in Pseudomonas fluorescens.